The following is a 304-amino-acid chain: Putative S-adenosyl-L-methionine-dependent methyltransferase MSMEG_1481/MSMEI_1445 (304 aa).

Residues aspartate 127 and 156 to 157 each bind S-adenosyl-L-methionine; that span reads DL.

It belongs to the UPF0677 family.

In terms of biological role, exhibits S-adenosyl-L-methionine-dependent methyltransferase activity. This Mycolicibacterium smegmatis (strain ATCC 700084 / mc(2)155) (Mycobacterium smegmatis) protein is Putative S-adenosyl-L-methionine-dependent methyltransferase MSMEG_1481/MSMEI_1445.